Here is a 313-residue protein sequence, read N- to C-terminus: Olfactory receptor 8B3 (313 aa).

The Extracellular portion of the chain corresponds to 1–25 (MLARNNSLVTEFILAGLTDHPEFQQ). Asparagine 5 carries an N-linked (GlcNAc...) asparagine glycan. Residues 26 to 46 (PLFFLFLVVYIVTMVGNLGLI) form a helical membrane-spanning segment. Over 47-54 (ILFGLNSH) the chain is Cytoplasmic. A helical transmembrane segment spans residues 55–75 (LHTPMYYFLFNLSFIDLCYSS). Residues 76–99 (VFTPKMLMNFVSKKNIISYVGCMT) are Extracellular-facing. A disulfide bridge connects residues cysteine 97 and cysteine 189. The helical transmembrane segment at 100-120 (QLFFFLFFVISECYMLTSMAY) threads the bilayer. Over 121–139 (DRYVAICNPLLYKVTMSHQ) the chain is Cytoplasmic. Residues 140-160 (VCSMLTFAAYIMGLAGATAHT) form a helical membrane-spanning segment. The Extracellular portion of the chain corresponds to 161–197 (GCMLRLTFCSANIINHYLCDILPLLQLSCTSTYVNEV). The helical transmembrane segment at 198–217 (VVLIVVGINIMVPSCTILIS) threads the bilayer. The Cytoplasmic segment spans residues 218–237 (YVFIVTSILHIKSTQGRSKA). The helical transmembrane segment at 238 to 258 (FSTCSSHVIALSLFFGSAAFM) threads the bilayer. Residues 259-270 (YIKYSSGSMEQG) are Extracellular-facing. Residues 271 to 291 (KVSSVFYTNVVPMLNPLIYSL) traverse the membrane as a helical segment. At 292–313 (RNKDVKVALRKALIKIQRRNIF) the chain is on the cytoplasmic side.

This sequence belongs to the G-protein coupled receptor 1 family.

Its subcellular location is the cell membrane. Its function is as follows. Odorant receptor. This chain is Olfactory receptor 8B3 (OR8B3), found in Homo sapiens (Human).